Here is a 478-residue protein sequence, read N- to C-terminus: Aspartyl/glutamyl-tRNA(Asn/Gln) amidotransferase subunit B (478 aa).

This sequence belongs to the GatB/GatE family. GatB subfamily. As to quaternary structure, heterotrimer of A, B and C subunits.

It carries out the reaction L-glutamyl-tRNA(Gln) + L-glutamine + ATP + H2O = L-glutaminyl-tRNA(Gln) + L-glutamate + ADP + phosphate + H(+). It catalyses the reaction L-aspartyl-tRNA(Asn) + L-glutamine + ATP + H2O = L-asparaginyl-tRNA(Asn) + L-glutamate + ADP + phosphate + 2 H(+). Allows the formation of correctly charged Asn-tRNA(Asn) or Gln-tRNA(Gln) through the transamidation of misacylated Asp-tRNA(Asn) or Glu-tRNA(Gln) in organisms which lack either or both of asparaginyl-tRNA or glutaminyl-tRNA synthetases. The reaction takes place in the presence of glutamine and ATP through an activated phospho-Asp-tRNA(Asn) or phospho-Glu-tRNA(Gln). The chain is Aspartyl/glutamyl-tRNA(Asn/Gln) amidotransferase subunit B from Pseudothermotoga lettingae (strain ATCC BAA-301 / DSM 14385 / NBRC 107922 / TMO) (Thermotoga lettingae).